The following is a 219-amino-acid chain: GPI ethanolamine phosphate transferase, stabilizing subunit (219 aa).

The next 6 helical transmembrane spans lie at 11–31 (YTNL…SFFV), 42–62 (TWLC…YLVV), 86–106 (CFLM…APLI), 113–133 (FLFA…LLGP), 155–175 (LQIT…PIPL), and 189–209 (TLGA…WIYW).

The protein belongs to the PIGF family. As to quaternary structure, part of the ethanolamine phosphate transferase 3 complex composed by PIGO and PIGF. Part of the ethanolamine phosphate transferase 2 complex with PIGG. PIGF is required to stabilize PIGG and PIGO.

It is found in the endoplasmic reticulum membrane. It participates in glycolipid biosynthesis; glycosylphosphatidylinositol-anchor biosynthesis. In terms of biological role, stabilizing subunit of the ethanolamine phosphate transferase 3 and ethanolamine phosphate transferase 2 complexes that sequentially transfer an ethanolamine phosphate (EtNP) from a phosphatidylethanolamine (PE) to the 6-OH position of the third alpha-1,2-linked mannose and the second alpha-1,6-linked mannose of the alpha-D-Man-(1-&gt;2)-alpha-D-Man-(1-&gt;6)-2-PEtn-alpha-D-Man-(1-&gt;4)-alpha-D-GlcN-(1-&gt;6)-(1-radyl,2-acyl-sn-glycero-3-phospho)-2-acyl-inositol (also termed H6) intermediate to generate a 6-PEtn-alpha-D-Man-(1-&gt;2)-6-PEtn-alpha-D-Man-(1-&gt;6)-2-PEtn-alpha-D-Man-(1-&gt;4)-alpha-D-GlcN-(1-&gt;6)-(1-radyl,2-acyl-sn-glycero-3-phospho)-2-acyl-inositol (also termed H8). Participates in the tenth and eleventh steps of the glycosylphosphatidylinositol-anchor biosynthesis, in association with PIGO and PIGG, respectively. This Mus musculus (Mouse) protein is GPI ethanolamine phosphate transferase, stabilizing subunit.